We begin with the raw amino-acid sequence, 30 residues long: Cyclotide cter-F (30 aa).

Positions 1 to 30 (GIPCGESCVFIPCISSVVGCSCKSKVCYLD) form a cross-link, cyclopeptide (Gly-Asp). Intrachain disulfides connect Cys4/Cys20, Cys8/Cys22, and Cys13/Cys27.

Post-translationally, contains 3 disulfide bonds. This is a cyclic peptide.

Its function is as follows. Probably participates in a plant defense mechanism. In Clitoria ternatea (Butterfly pea), this protein is Cyclotide cter-F.